Reading from the N-terminus, the 195-residue chain is U8 snoRNA-decapping enzyme (195 aa).

One can recognise a Nudix hydrolase domain in the interval Gly-18–Glu-173. His-24, Arg-50, and Phe-57 together coordinate substrate. Mn(2+) is bound by residues Gly-59, Glu-76, Glu-80, and His-99. The Nudix box motif lies at Phe-61 to Gly-82. Residue Gln-170 participates in substrate binding. Glu-173 lines the Mn(2+) pocket.

It belongs to the Nudix hydrolase family. NUDT16 subfamily. As to quaternary structure, homodimer. Mg(2+) serves as cofactor. Mn(2+) is required as a cofactor. The cofactor is Co(2+). Expressed strongly in lung, kidney, adrenal gland, testis, heart and brain.

The protein localises to the nucleus. The protein resides in the nucleoplasm. Its subcellular location is the nucleolus. It is found in the cytoplasm. The enzyme catalyses a 5'-end (N(7)-methyl 5'-triphosphoguanosine)-ribonucleoside in mRNA + H2O = N(7)-methyl-GDP + a 5'-end phospho-ribonucleoside in mRNA + 2 H(+). It catalyses the reaction IDP + H2O = IMP + phosphate + H(+). It carries out the reaction dIDP + H2O = dIMP + phosphate + H(+). The catalysed reaction is a 5'-end NAD(+)-phospho-ribonucleoside in mRNA + H2O = a 5'-end phospho-adenosine-phospho-ribonucleoside in mRNA + beta-nicotinamide D-ribonucleotide + 2 H(+). The enzyme catalyses a 5'-end FAD-phospho-ribonucleoside in mRNA + H2O = a 5'-end phospho-adenosine-phospho-ribonucleoside in mRNA + FMN + 2 H(+). It catalyses the reaction a 5'-end CoA-ribonucleoside in mRNA + H2O = a 5'-end phospho-adenosine-phospho-ribonucleoside in mRNA + (R)-4'-phosphopantetheine + 2 H(+). The phosphatase activity is inhibited by the product IMP. Functionally, RNA-binding and decapping enzyme that catalyzes the cleavage of the cap structure of snoRNAs and mRNAs in a metal-dependent manner. Part of the U8 snoRNP complex that is required for the accumulation of mature 5.8S and 28S rRNA. Has diphosphatase activity and removes m7G and/or m227G caps from U8 snoRNA and leaves a 5'monophosphate on the RNA. Also catalyzes the cleavage of the cap structure on mRNAs. Does not hydrolyze cap analog structures like 7-methylguanosine nucleoside triphosphate (m7GpppG). Also hydrolysis m7G- and m227G U3-capped RNAs but with less efficiencies. Has broad substrate specificity with manganese or cobalt as cofactor and can act on various RNA species. Binds to the U8 snoRNA; metal is not required for RNA-binding. May play a role in the regulation of snoRNAs and mRNAs degradation. Also acts as a phosphatase; hydrolyzes the non-canonical purine nucleotides inosine diphosphate (IDP) and deoxyinosine diphosphate (dITP) as well as guanosine diphosphate (GDP), deoxyguanosine diphosphate (dGDP), xanthine diphosphate (XDP), inosine triphosphate (ITP) and deoxyinosine triphosphate (ITP) to their respective monophosphate derivatives and does not distinguish between the deoxy- and ribose forms. The order of activity with different substrates is IDP &gt; dIDP &gt;&gt; GDP = dGDP &gt; XDP = ITP = dITP. Binds strongly to GTP, ITP and XTP. Participates in the hydrolysis of dIDP/IDP and probably excludes non-canonical purines from RNA and DNA precursor pools, thus preventing their incorporation into RNA and DNA and avoiding chromosomal lesions. Exhibits decapping activity towards NAD-capped RNAs and FAD-capped RNAs. Exhibits decapping activity towards dpCoA-capped RNAs in vitro. This chain is U8 snoRNA-decapping enzyme (NUDT16), found in Homo sapiens (Human).